A 260-amino-acid polypeptide reads, in one-letter code: Pyridoxine 5'-phosphate synthase (260 aa).

2 residues coordinate 3-amino-2-oxopropyl phosphate: Asn10 and Arg21. His46 serves as the catalytic Proton acceptor. Arg48 and His53 together coordinate 1-deoxy-D-xylulose 5-phosphate. Glu76 functions as the Proton acceptor in the catalytic mechanism. Thr113 serves as a coordination point for 1-deoxy-D-xylulose 5-phosphate. The Proton donor role is filled by His204. 3-amino-2-oxopropyl phosphate-binding positions include Asp205 and 227-228 (GH).

The protein belongs to the PNP synthase family. In terms of assembly, homooctamer; tetramer of dimers.

It is found in the cytoplasm. The catalysed reaction is 3-amino-2-oxopropyl phosphate + 1-deoxy-D-xylulose 5-phosphate = pyridoxine 5'-phosphate + phosphate + 2 H2O + H(+). It functions in the pathway cofactor biosynthesis; pyridoxine 5'-phosphate biosynthesis; pyridoxine 5'-phosphate from D-erythrose 4-phosphate: step 5/5. In terms of biological role, catalyzes the complicated ring closure reaction between the two acyclic compounds 1-deoxy-D-xylulose-5-phosphate (DXP) and 3-amino-2-oxopropyl phosphate (1-amino-acetone-3-phosphate or AAP) to form pyridoxine 5'-phosphate (PNP) and inorganic phosphate. The sequence is that of Pyridoxine 5'-phosphate synthase from Xylella fastidiosa (strain M12).